We begin with the raw amino-acid sequence, 230 residues long: Heptaprenylglyceryl phosphate synthase (230 aa).

Lysine 12 contributes to the sn-glycerol 1-phosphate binding site. Positions 14 and 40 each coordinate Mg(2+). Sn-glycerol 1-phosphate contacts are provided by residues 159–164, glycine 189, and 209–210; these read YIEYSG and GD.

Belongs to the GGGP/HepGP synthase family. Group I subfamily. As to quaternary structure, homodimer. It depends on Mg(2+) as a cofactor.

The catalysed reaction is sn-glycerol 1-phosphate + all-trans-heptaprenyl diphosphate = 3-heptaprenyl-sn-glycero-1-phosphate + diphosphate. It functions in the pathway membrane lipid metabolism; glycerophospholipid metabolism. Its function is as follows. Prenyltransferase that catalyzes in vivo the transfer of the heptaprenyl moiety of heptaprenyl pyrophosphate (HepPP; 35 carbon atoms) to the C3 hydroxyl of sn-glycerol-1-phosphate (G1P), producing heptaprenylglyceryl phosphate (HepGP). This reaction is an ether-bond-formation step in the biosynthesis of archaea-type G1P-based membrane lipids found in Bacillales. The protein is Heptaprenylglyceryl phosphate synthase of Staphylococcus aureus (strain Mu3 / ATCC 700698).